We begin with the raw amino-acid sequence, 264 residues long: Acetylglutamate kinase (264 aa).

Residues Gly-40–Gly-41, Arg-62, and Asn-158 contribute to the substrate site.

This sequence belongs to the acetylglutamate kinase family. ArgB subfamily.

The protein resides in the cytoplasm. The catalysed reaction is N-acetyl-L-glutamate + ATP = N-acetyl-L-glutamyl 5-phosphate + ADP. Its pathway is amino-acid biosynthesis; L-arginine biosynthesis; N(2)-acetyl-L-ornithine from L-glutamate: step 2/4. Functionally, catalyzes the ATP-dependent phosphorylation of N-acetyl-L-glutamate. In Cytophaga hutchinsonii (strain ATCC 33406 / DSM 1761 / CIP 103989 / NBRC 15051 / NCIMB 9469 / D465), this protein is Acetylglutamate kinase.